The chain runs to 296 residues: Phosphoribosylaminoimidazole-succinocarboxamide synthase (296 aa).

This sequence belongs to the SAICAR synthetase family.

The catalysed reaction is 5-amino-1-(5-phospho-D-ribosyl)imidazole-4-carboxylate + L-aspartate + ATP = (2S)-2-[5-amino-1-(5-phospho-beta-D-ribosyl)imidazole-4-carboxamido]succinate + ADP + phosphate + 2 H(+). Its pathway is purine metabolism; IMP biosynthesis via de novo pathway; 5-amino-1-(5-phospho-D-ribosyl)imidazole-4-carboxamide from 5-amino-1-(5-phospho-D-ribosyl)imidazole-4-carboxylate: step 1/2. This is Phosphoribosylaminoimidazole-succinocarboxamide synthase from Syntrophotalea carbinolica (strain DSM 2380 / NBRC 103641 / GraBd1) (Pelobacter carbinolicus).